We begin with the raw amino-acid sequence, 122 residues long: Cofilin-5 (122 aa).

The 120-residue stretch at 3–122 folds into the ADF-H domain; it reads SRIIEIDPNC…VKDLIQLSNL (120 aa).

The protein belongs to the actin-binding proteins ADF family.

The protein localises to the cytoplasm. The protein resides in the cytoskeleton. Controls actin polymerization and depolymerization. In Dictyostelium discoideum (Social amoeba), this protein is Cofilin-5 (cofF).